Here is a 101-residue protein sequence, read N- to C-terminus: Protein S100-A7A (101 aa).

EF-hand domains are found at residues 13–48 (MIDM…SACD) and 50–85 (KGIH…IAAD). Zn(2+) is bound by residues H18, E28, and E38. Residues D63 and N65 each contribute to the Ca(2+) site. Zn(2+) is bound at residue E66. D67, K69, and E74 together coordinate Ca(2+). H87 and H91 together coordinate Zn(2+).

It belongs to the S-100 family. In terms of tissue distribution, overexpressed in psoriasis.

It is found in the cytoplasm. May be involved in epidermal differentiation and inflammation and might therefore be important for the pathogenesis of psoriasis and other diseases. The sequence is that of Protein S100-A7A (S100A7A) from Homo sapiens (Human).